Here is a 181-residue protein sequence, read N- to C-terminus: Thioredoxin-like protein CITRX1, chloroplastic (181 aa).

The tract at residues 1-20 (MQAATLSFHPSAPPPQTSAC) is disordered. The N-terminal 70 residues, 1-70 (MQAATLSFHP…PAVATGKYVR (70 aa)), are a transit peptide targeting the chloroplast. The Thioredoxin domain occupies 71 to 181 (EDYLVKKVSA…MMRDIINNDL (111 aa)). Residues C104 and C107 each act as nucleophile in the active site. Residues C104 and C107 are joined by a disulfide bond.

The protein belongs to the thioredoxin family. Plant CITRX-type subfamily.

Its subcellular location is the plastid. The protein localises to the chloroplast. Probable thiol-disulfide oxidoreductase that may play a role in proper chloroplast development. This is Thioredoxin-like protein CITRX1, chloroplastic from Nicotiana benthamiana.